The sequence spans 509 residues: Cardiolipin synthase 1 (509 aa).

Transmembrane regions (helical) follow at residues proline 4–threonine 24, tyrosine 30–isoleucine 50, and leucine 59–phenylalanine 79. PLD phosphodiesterase domains follow at residues valine 238–tyrosine 265 and lysine 422–serine 449. Residues histidine 243, lysine 245, aspartate 250, histidine 427, lysine 429, and aspartate 434 contribute to the active site.

The protein belongs to the phospholipase D family. Cardiolipin synthase subfamily.

It is found in the cell membrane. It catalyses the reaction 2 a 1,2-diacyl-sn-glycero-3-phospho-(1'-sn-glycerol) = a cardiolipin + glycerol. Its function is as follows. Catalyzes the reversible phosphatidyl group transfer from one phosphatidylglycerol molecule to another to form cardiolipin (CL) (diphosphatidylglycerol) and glycerol. This Bacillus cereus (strain ATCC 14579 / DSM 31 / CCUG 7414 / JCM 2152 / NBRC 15305 / NCIMB 9373 / NCTC 2599 / NRRL B-3711) protein is Cardiolipin synthase 1 (cls1).